The following is a 489-amino-acid chain: Diaminopimelate decarboxylase 2, chloroplastic (489 aa).

The N-terminal 50 residues, 1 to 50 (MAAVTQFLSQPSSIRGTLNQYQLNQTSLSRIPFLSLKSTLKPLKRLSVKA), are a transit peptide targeting the chloroplast. The residue at position 51 (alanine 51) is an N-acetylalanine. The residue at position 130 (lysine 130) is an N6-(pyridoxal phosphate)lysine. Pyridoxal 5'-phosphate-binding positions include glycine 309 and 345–348 (EPGR). The substrate site is built by arginine 348, arginine 384, and tyrosine 388. The active-site Proton donor is cysteine 416. Glutamate 417 and tyrosine 445 together coordinate substrate. Tyrosine 445 contacts pyridoxal 5'-phosphate.

It belongs to the Orn/Lys/Arg decarboxylase class-II family. LysA subfamily. Homodimer. The cofactor is pyridoxal 5'-phosphate.

It is found in the plastid. It localises to the chloroplast. The enzyme catalyses meso-2,6-diaminopimelate + H(+) = L-lysine + CO2. It functions in the pathway amino-acid biosynthesis; L-lysine biosynthesis via DAP pathway; L-lysine from DL-2,6-diaminopimelate: step 1/1. Specifically catalyzes the decarboxylation of meso-diaminopimelate (meso-DAP) to L-lysine. The polypeptide is Diaminopimelate decarboxylase 2, chloroplastic (LYSA2) (Arabidopsis thaliana (Mouse-ear cress)).